Reading from the N-terminus, the 497-residue chain is Glutamate--tRNA ligase (497 aa).

The 'HIGH' region signature appears at 12–22 (PSPTGHLHIGN). The short motif at 259–263 (KLSKR) is the 'KMSKS' region element. Lys262 contributes to the ATP binding site.

The protein belongs to the class-I aminoacyl-tRNA synthetase family. Glutamate--tRNA ligase type 1 subfamily. Monomer.

The protein localises to the cytoplasm. It catalyses the reaction tRNA(Glu) + L-glutamate + ATP = L-glutamyl-tRNA(Glu) + AMP + diphosphate. In terms of biological role, catalyzes the attachment of glutamate to tRNA(Glu) in a two-step reaction: glutamate is first activated by ATP to form Glu-AMP and then transferred to the acceptor end of tRNA(Glu). This chain is Glutamate--tRNA ligase, found in Lacticaseibacillus casei (strain BL23) (Lactobacillus casei).